The sequence spans 573 residues: Diflavin flavoprotein A 1 (573 aa).

Positions 43-236 (QNGTTYNSYL…GTISTVANGH (194 aa)) are zinc metallo-hydrolase. Residues His92, Glu94, Asp96, His159, Asp178, and His236 each contribute to the Fe cation site. Positions 265–401 (VVVFYVADYG…LCDESGTDLG (137 aa)) constitute a Flavodoxin-like domain. The flavodoxin-reductase-like stretch occupies residues 424–573 (IGRISGGLYI…VHHRKVGNYY (150 aa)).

It in the N-terminal section; belongs to the zinc metallo-hydrolase group 3 family. This sequence in the C-terminal section; belongs to the flavodoxin reductase family. Homodimer. Fe cation serves as cofactor. FAD is required as a cofactor. Requires FMN as cofactor.

Mediates electron transfer from NADH to oxygen, reducing it to water. This modular protein has 3 redox cofactors, in other organisms the same activity requires 2 or 3 proteins. The protein is Diflavin flavoprotein A 1 (dfa1) of Synechocystis sp. (strain ATCC 27184 / PCC 6803 / Kazusa).